The primary structure comprises 237 residues: Oligoribonuclease, mitochondrial (237 aa).

The transit peptide at 1–25 (MLGGSLGSRLLRGVGGTRGQFRARG) directs the protein to the mitochondrion. The Exonuclease domain maps to 43-207 (MVWVDLEMTG…DDISESIKEL (165 aa)). D47 and E49 together coordinate Mg(2+). S92 is modified (phosphoserine). Y122 is subject to Phosphotyrosine. D147 is a binding site for Mg(2+). K173 is subject to N6-acetyllysine. Residue H194 is part of the active site. Position 199 (D199) interacts with Mg(2+).

The protein belongs to the oligoribonuclease family. Homodimer. Homotetramer. It depends on Mn(2+) as a cofactor. Mg(2+) is required as a cofactor.

The protein localises to the mitochondrion intermembrane space. It localises to the mitochondrion matrix. Its subcellular location is the mitochondrion. The protein resides in the cytoplasm. It is found in the nucleus. Its function is as follows. 3'-to-5'exoribonuclease that preferentially degrades DNA and RNA oligonucleotides composed of only two nucleotides. Binds and degrades longer oligonucleotides with a lower affinity. Plays dual roles in mitochondria, scavenging nanoRNAs (small RNA oligonucleotides of &lt;5 nucleotides) that are produced by the degradosome and clearing short RNAs that are generated by RNA processing. Essential for correct initiation of mitochondrial transcription, degrading mitochondrial RNA dinucleotides to prevent RNA-primed transcription at non-canonical sites in the mitochondrial genome. Essential for embryonic development. In Bos taurus (Bovine), this protein is Oligoribonuclease, mitochondrial (REXO2).